A 90-amino-acid polypeptide reads, in one-letter code: Small ribosomal subunit protein bS16 (90 aa).

Belongs to the bacterial ribosomal protein bS16 family.

The sequence is that of Small ribosomal subunit protein bS16 from Streptococcus thermophilus (strain CNRZ 1066).